Reading from the N-terminus, the 186-residue chain is Large ribosomal subunit protein bL9 (186 aa).

A disordered region spans residues 153-186 (ELRQVKSQSQKSQQQEAKQNEVGEATDSDKADQK). The segment covering 157–169 (VKSQSQKSQQQEA) has biased composition (low complexity).

It belongs to the bacterial ribosomal protein bL9 family.

Functionally, binds to the 23S rRNA. The protein is Large ribosomal subunit protein bL9 of Wolbachia sp. subsp. Brugia malayi (strain TRS).